Reading from the N-terminus, the 363-residue chain is Large ribosomal subunit protein uL4B (363 aa).

Residues 280–363 (PENIISNADV…EKFLSVLHEN (84 aa)) form a C-terminal-extended nuclear localization signal region.

The protein belongs to the universal ribosomal protein uL4 family. As to quaternary structure, component of the large ribosomal subunit (LSU). Mature yeast ribosomes consist of a small (40S) and a large (60S) subunit. The 40S small subunit contains 1 molecule of ribosomal RNA (18S rRNA) and at least 33 different proteins. The large 60S subunit contains 3 rRNA molecules (25S, 5.8S and 5S rRNA) and at least 46 different proteins. uL4 is associated with the polypeptide exit tunnel. uL4 interacts with its chaperone ACL4 and the nuclear import receptor KAP104.

Its subcellular location is the cytoplasm. Component of the ribosome, a large ribonucleoprotein complex responsible for the synthesis of proteins in the cell. The small ribosomal subunit (SSU) binds messenger RNAs (mRNAs) and translates the encoded message by selecting cognate aminoacyl-transfer RNA (tRNA) molecules. The large subunit (LSU) contains the ribosomal catalytic site termed the peptidyl transferase center (PTC), which catalyzes the formation of peptide bonds, thereby polymerizing the amino acids delivered by tRNAs into a polypeptide chain. The nascent polypeptides leave the ribosome through a tunnel in the LSU and interact with protein factors that function in enzymatic processing, targeting, and the membrane insertion of nascent chains at the exit of the ribosomal tunnel. The sequence is that of Large ribosomal subunit protein uL4B (rpl401) from Schizosaccharomyces pombe (strain 972 / ATCC 24843) (Fission yeast).